The sequence spans 93 residues: Alpha-elapitoxin-Oh2a (93 aa).

An N-terminal signal peptide occupies residues 1-21 (MKTLLLTLVVVTIVCLDLGYT). Cystine bridges form between C24/C43, C36/C64, C49/C53, C68/C79, and C80/C85.

This sequence belongs to the three-finger toxin family. Long-chain subfamily. Type II alpha-neurotoxin sub-subfamily. As to expression, expressed by the venom gland.

The protein localises to the secreted. Functionally, binds with high affinity to muscular (alpha-1/CHRNA1) and neuronal (alpha-7/CHRNA7) nicotinic acetylcholine receptor (nAChR) and inhibits acetylcholine from binding to the receptor, thereby impairing neuromuscular and neuronal transmission. The protein is Alpha-elapitoxin-Oh2a of Ophiophagus hannah (King cobra).